A 316-amino-acid chain; its full sequence is 4-hydroxy-3-methylbut-2-enyl diphosphate reductase (316 aa).

Cys12 provides a ligand contact to [4Fe-4S] cluster. The (2E)-4-hydroxy-3-methylbut-2-enyl diphosphate site is built by His41 and His74. Dimethylallyl diphosphate contacts are provided by His41 and His74. The isopentenyl diphosphate site is built by His41 and His74. Cys96 lines the [4Fe-4S] cluster pocket. (2E)-4-hydroxy-3-methylbut-2-enyl diphosphate is bound at residue His124. His124 serves as a coordination point for dimethylallyl diphosphate. His124 contributes to the isopentenyl diphosphate binding site. Glu126 (proton donor) is an active-site residue. Thr167 is a binding site for (2E)-4-hydroxy-3-methylbut-2-enyl diphosphate. Residue Cys197 participates in [4Fe-4S] cluster binding. Positions 225, 226, 227, and 269 each coordinate (2E)-4-hydroxy-3-methylbut-2-enyl diphosphate. Positions 225, 226, 227, and 269 each coordinate dimethylallyl diphosphate. Positions 225, 226, 227, and 269 each coordinate isopentenyl diphosphate.

This sequence belongs to the IspH family. Homodimer. The cofactor is [4Fe-4S] cluster.

The catalysed reaction is isopentenyl diphosphate + 2 oxidized [2Fe-2S]-[ferredoxin] + H2O = (2E)-4-hydroxy-3-methylbut-2-enyl diphosphate + 2 reduced [2Fe-2S]-[ferredoxin] + 2 H(+). It catalyses the reaction dimethylallyl diphosphate + 2 oxidized [2Fe-2S]-[ferredoxin] + H2O = (2E)-4-hydroxy-3-methylbut-2-enyl diphosphate + 2 reduced [2Fe-2S]-[ferredoxin] + 2 H(+). It participates in isoprenoid biosynthesis; dimethylallyl diphosphate biosynthesis; dimethylallyl diphosphate from (2E)-4-hydroxy-3-methylbutenyl diphosphate: step 1/1. It functions in the pathway isoprenoid biosynthesis; isopentenyl diphosphate biosynthesis via DXP pathway; isopentenyl diphosphate from 1-deoxy-D-xylulose 5-phosphate: step 6/6. Catalyzes the conversion of 1-hydroxy-2-methyl-2-(E)-butenyl 4-diphosphate (HMBPP) into a mixture of isopentenyl diphosphate (IPP) and dimethylallyl diphosphate (DMAPP). Acts in the terminal step of the DOXP/MEP pathway for isoprenoid precursor biosynthesis. The sequence is that of 4-hydroxy-3-methylbut-2-enyl diphosphate reductase from Shigella flexneri serotype 5b (strain 8401).